Reading from the N-terminus, the 252-residue chain is 5'-nucleotidase SurE (252 aa).

A divalent metal cation is bound by residues Asp-8, Asp-9, Ser-42, and Asn-94.

Belongs to the SurE nucleotidase family. A divalent metal cation serves as cofactor.

Its subcellular location is the cytoplasm. The catalysed reaction is a ribonucleoside 5'-phosphate + H2O = a ribonucleoside + phosphate. In terms of biological role, nucleotidase that shows phosphatase activity on nucleoside 5'-monophosphates. The polypeptide is 5'-nucleotidase SurE (Ehrlichia ruminantium (strain Welgevonden)).